The chain runs to 426 residues: Glutamate-1-semialdehyde 2,1-aminomutase (426 aa).

Lysine 265 is modified (N6-(pyridoxal phosphate)lysine).

Belongs to the class-III pyridoxal-phosphate-dependent aminotransferase family. HemL subfamily. As to quaternary structure, homodimer. It depends on pyridoxal 5'-phosphate as a cofactor.

It is found in the cytoplasm. It carries out the reaction (S)-4-amino-5-oxopentanoate = 5-aminolevulinate. It functions in the pathway porphyrin-containing compound metabolism; protoporphyrin-IX biosynthesis; 5-aminolevulinate from L-glutamyl-tRNA(Glu): step 2/2. The polypeptide is Glutamate-1-semialdehyde 2,1-aminomutase (Escherichia coli O157:H7).